The primary structure comprises 483 residues: Cobyric acid synthase (483 aa).

Residues 251–438 (ALIVAVPMLP…LHGVFSADRF (188 aa)) form the GATase cobBQ-type domain. Cys-333 functions as the Nucleophile in the catalytic mechanism. His-430 is a catalytic residue.

The protein belongs to the CobB/CobQ family. CobQ subfamily.

The protein operates within cofactor biosynthesis; adenosylcobalamin biosynthesis. Its function is as follows. Catalyzes amidations at positions B, D, E, and G on adenosylcobyrinic A,C-diamide. NH(2) groups are provided by glutamine, and one molecule of ATP is hydrogenolyzed for each amidation. The chain is Cobyric acid synthase from Brucella suis biovar 1 (strain 1330).